The following is a 338-amino-acid chain: RNA 3'-terminal phosphate cyclase (338 aa).

ATP is bound by residues Gln103 and 283–287 (YLADQ). His308 functions as the Tele-AMP-histidine intermediate in the catalytic mechanism.

Belongs to the RNA 3'-terminal cyclase family. Type 1 subfamily.

The protein localises to the cytoplasm. It carries out the reaction a 3'-end 3'-phospho-ribonucleotide-RNA + ATP = a 3'-end 2',3'-cyclophospho-ribonucleotide-RNA + AMP + diphosphate. In terms of biological role, catalyzes the conversion of 3'-phosphate to a 2',3'-cyclic phosphodiester at the end of RNA. The mechanism of action of the enzyme occurs in 3 steps: (A) adenylation of the enzyme by ATP; (B) transfer of adenylate to an RNA-N3'P to produce RNA-N3'PP5'A; (C) and attack of the adjacent 2'-hydroxyl on the 3'-phosphorus in the diester linkage to produce the cyclic end product. The biological role of this enzyme is unknown but it is likely to function in some aspects of cellular RNA processing. The polypeptide is RNA 3'-terminal phosphate cyclase (Escherichia coli (strain SMS-3-5 / SECEC)).